The sequence spans 322 residues: uncharacterized protein (322 aa).

This is an uncharacterized protein from Acanthamoeba polyphaga mimivirus (APMV).